The primary structure comprises 575 residues: Protein AUXIN SIGNALING F-BOX 2 (575 aa).

The 47-residue stretch at 1 to 47 (MNYFPDEVIEHVFDFVTSHKDRNAISLVCKSWYKIERYSRQKVFIGN) folds into the F-box domain. Residue lysine 69 participates in 1D-myo-inositol hexakisphosphate binding. The segment at 76-77 (DF) is interaction with auxin-responsive proteins. 1D-myo-inositol hexakisphosphate is bound by residues 108 to 109 (KR) and arginine 340. The interaction with auxin-responsive proteins stretch occupies residues 343–348 (PSDLLG). 396 to 398 (RFR) serves as a coordination point for 1D-myo-inositol hexakisphosphate. Residues 400 to 404 (CILEP) are interaction with auxin-responsive proteins. Arginine 431 contributes to the 1D-myo-inositol hexakisphosphate binding site. Residues 459–460 (AF) form an interaction with auxin-responsive proteins region. 1D-myo-inositol hexakisphosphate-binding positions include 479 to 480 (KK) and arginine 504.

In terms of assembly, part of a SCF (SKP1-cullin-F-box) protein ligase complex. Interacts with Aux/IAA proteins (IAA7) in an auxin-dependent manner. As to expression, ubiquitous, with higher levels in seedlings.

The protein resides in the nucleus. It functions in the pathway protein modification; protein ubiquitination. Its function is as follows. Component of SCF(ASK-cullin-F-box) E3 ubiquitin ligase complexes, which may mediate the ubiquitination and subsequent proteasomal degradation of target proteins. Confers sensitivity to the virulent bacterial pathogen P.syringae. Auxin receptor that mediates Aux/IAA proteins proteasomal degradation and auxin-regulated transcription. Involved in embryogenesis regulation by auxin. The protein is Protein AUXIN SIGNALING F-BOX 2 (AFB2) of Arabidopsis thaliana (Mouse-ear cress).